The primary structure comprises 273 residues: MALNSINTNSGALIALQNLNSTNAELTQVQQRINTGKKIGSAKDNGAIWATAKNQSATAGSMNAVKDSLQRGQSTIDVALAAGDTITDLLGKMKEKALAASDTSLNTASFNALKSDFDSLRDQITKAASNAKFNGVSIADGTTTKLSFLANSDGSAFTVTAKTLTLGGLGLTATSSFTTAAAAKTMIGTIDTALQTATNKLASLGTSSTGLDTHLTFVGKLQDSLDAGVGNLVDADLAKESAKLQSLQTKQQLGVQALSIANQSSSSILSLFR.

This sequence belongs to the bacterial flagellin family. In terms of assembly, in C.crescentus, the flagellar filament is composed of multiple flagellins of 29 kDa; 27 kDa and 25 kDa.

It localises to the secreted. The protein resides in the bacterial flagellum. Functionally, flagellin is the subunit protein which polymerizes to form the filaments of bacterial flagella. The chain is Flagellin FljM (fljM) from Caulobacter vibrioides (strain ATCC 19089 / CIP 103742 / CB 15) (Caulobacter crescentus).